The following is a 268-amino-acid chain: Receptor expression-enhancing protein 2 (268 aa).

Helical transmembrane passes span 1–21 (MVSW…YPAY) and 35–55 (YVKW…ETIT). Residues 170–268 (GDDTHTAATL…TTANNVAESP (99 aa)) are disordered. The segment covering 180–196 (PRAKTATRTVRATPVPA) has biased composition (low complexity). Residues 199-216 (ESQHSSRSDDQSDSRTEH) show a composition bias toward basic and acidic residues. The segment covering 228-248 (RIAITRAAKKPAAAKTEQTTK) has biased composition (low complexity). Residues 249–258 (TVKKAPKKKP) show a composition bias toward basic residues.

Belongs to the DP1 family. Interacts with odorant receptor proteins.

The protein localises to the membrane. Functionally, may enhance the cell surface expression of odorant receptors. In Danio rerio (Zebrafish), this protein is Receptor expression-enhancing protein 2 (reep2).